A 355-amino-acid chain; its full sequence is 3-dehydroquinate synthase (355 aa).

NAD(+) is bound by residues 105–109 (GVVGD), 129–130 (TS), lysine 142, lysine 151, and 169–172 (TLKT). Residues glutamate 184, histidine 246, and histidine 263 each coordinate Zn(2+).

This sequence belongs to the sugar phosphate cyclases superfamily. Dehydroquinate synthase family. It depends on NAD(+) as a cofactor. The cofactor is Co(2+). Requires Zn(2+) as cofactor.

The protein localises to the cytoplasm. The catalysed reaction is 7-phospho-2-dehydro-3-deoxy-D-arabino-heptonate = 3-dehydroquinate + phosphate. It functions in the pathway metabolic intermediate biosynthesis; chorismate biosynthesis; chorismate from D-erythrose 4-phosphate and phosphoenolpyruvate: step 2/7. Functionally, catalyzes the conversion of 3-deoxy-D-arabino-heptulosonate 7-phosphate (DAHP) to dehydroquinate (DHQ). The sequence is that of 3-dehydroquinate synthase from Streptococcus agalactiae serotype III (strain NEM316).